We begin with the raw amino-acid sequence, 140 residues long: Protein ARABIDOPSIS THALIANA ANTHER 7 (140 aa).

An N-terminal signal peptide occupies residues 1–20; the sequence is MKIHAILVVAFLVLMKTAVS. Disulfide bonds link Cys-29/Cys-87, Cys-39/Cys-54, Cys-55/Cys-111, and Cys-85/Cys-125.

The protein belongs to the plant LTP family. In terms of tissue distribution, tapetum-specific. Also present in pollen.

The protein resides in the endoplasmic reticulum lumen. The protein is Protein ARABIDOPSIS THALIANA ANTHER 7 of Arabidopsis thaliana (Mouse-ear cress).